Reading from the N-terminus, the 406-residue chain is ATPase ASNA1 homolog (406 aa).

Residue 21–28 coordinates ATP; it reads KGGVGKTT. D62 is an active-site residue. Residues E300 and N327 each contribute to the ATP site. Zn(2+) is bound by residues C339 and C342.

It belongs to the arsA ATPase family. Homodimer.

Its subcellular location is the cytoplasm. It is found in the endoplasmic reticulum. Its function is as follows. ATPase required for the post-translational delivery of tail-anchored (TA) proteins to the endoplasmic reticulum. Recognizes and selectively binds the transmembrane domain of TA proteins in the cytosol. This complex then targets to the endoplasmic reticulum by membrane-bound receptors, where the tail-anchored protein is released for insertion. This process is regulated by ATP binding and hydrolysis. ATP binding drives the homodimer towards the closed dimer state, facilitating recognition of newly synthesized TA membrane proteins. ATP hydrolysis is required for insertion. Subsequently, the homodimer reverts towards the open dimer state, lowering its affinity for the membrane-bound receptor, and returning it to the cytosol to initiate a new round of targeting. The protein is ATPase ASNA1 homolog of Leishmania braziliensis.